The primary structure comprises 69 residues: Cytochrome c oxidase subunit 8A, mitochondrial (69 aa).

A mitochondrion-targeting transit peptide spans 1-25 (MSVLTPLLLRGLTGSARRLPVPRAK). Positions 2 to 19 (SVLTPLLLRGLTGSARRL) match the SIFI-degron motif. Residues 26-36 (IHSLPPEGKLG) lie on the Mitochondrial matrix side of the membrane. Residues 37 to 60 (IMELAVGLTSCFVTFLLPAGWILS) form a helical membrane-spanning segment. Topologically, residues 61 to 69 (HLETYRRPE) are mitochondrial intermembrane.

The protein belongs to the cytochrome c oxidase VIII family. As to quaternary structure, component of the cytochrome c oxidase (complex IV, CIV), a multisubunit enzyme composed of 14 subunits. The complex is composed of a catalytic core of 3 subunits MT-CO1, MT-CO2 and MT-CO3, encoded in the mitochondrial DNA, and 11 supernumerary subunits COX4I1 (or COX4I2), COX5A, COX5B, COX6A1 (or COX6A2), COX6B1 (or COX6B2), COX6C, COX7A2 (or COX7A1), COX7B, COX7C, COX8A and NDUFA4, which are encoded in the nuclear genome. The complex exists as a monomer or a dimer and forms supercomplexes (SCs) in the inner mitochondrial membrane with NADH-ubiquinone oxidoreductase (complex I, CI) and ubiquinol-cytochrome c oxidoreductase (cytochrome b-c1 complex, complex III, CIII), resulting in different assemblies (supercomplex SCI(1)III(2)IV(1) and megacomplex MCI(2)III(2)IV(2)). In response to mitochondrial stress, the precursor protein is ubiquitinated by the SIFI complex in the cytoplasm before mitochondrial import, leading to its degradation. Within the SIFI complex, UBR4 initiates ubiquitin chain that are further elongated or branched by KCMF1. In terms of tissue distribution, widely expressed.

The protein localises to the mitochondrion inner membrane. It functions in the pathway energy metabolism; oxidative phosphorylation. Component of the cytochrome c oxidase, the last enzyme in the mitochondrial electron transport chain which drives oxidative phosphorylation. The respiratory chain contains 3 multisubunit complexes succinate dehydrogenase (complex II, CII), ubiquinol-cytochrome c oxidoreductase (cytochrome b-c1 complex, complex III, CIII) and cytochrome c oxidase (complex IV, CIV), that cooperate to transfer electrons derived from NADH and succinate to molecular oxygen, creating an electrochemical gradient over the inner membrane that drives transmembrane transport and the ATP synthase. Cytochrome c oxidase is the component of the respiratory chain that catalyzes the reduction of oxygen to water. Electrons originating from reduced cytochrome c in the intermembrane space (IMS) are transferred via the dinuclear copper A center (CU(A)) of subunit 2 and heme A of subunit 1 to the active site in subunit 1, a binuclear center (BNC) formed by heme A3 and copper B (CU(B)). The BNC reduces molecular oxygen to 2 water molecules using 4 electrons from cytochrome c in the IMS and 4 protons from the mitochondrial matrix. In Homo sapiens (Human), this protein is Cytochrome c oxidase subunit 8A, mitochondrial (COX8A).